We begin with the raw amino-acid sequence, 325 residues long: Ribosomal RNA small subunit methyltransferase H (325 aa).

S-adenosyl-L-methionine-binding positions include 41-43 (GGH), aspartate 60, tyrosine 87, aspartate 108, and glutamine 115. The segment at 295–325 (DDDEKAANPRAAPVRLRAAERTRASEDRRGS) is disordered. Residues 311–325 (RAAERTRASEDRRGS) show a composition bias toward basic and acidic residues.

Belongs to the methyltransferase superfamily. RsmH family.

The protein resides in the cytoplasm. The catalysed reaction is cytidine(1402) in 16S rRNA + S-adenosyl-L-methionine = N(4)-methylcytidine(1402) in 16S rRNA + S-adenosyl-L-homocysteine + H(+). Functionally, specifically methylates the N4 position of cytidine in position 1402 (C1402) of 16S rRNA. The chain is Ribosomal RNA small subunit methyltransferase H from Leifsonia xyli subsp. xyli (strain CTCB07).